We begin with the raw amino-acid sequence, 136 residues long: Large ribosomal subunit protein uL3 (136 aa).

Glutamine 83 carries the N5-methylglutamine modification.

Belongs to the universal ribosomal protein uL3 family. As to quaternary structure, part of the 50S ribosomal subunit. Forms a cluster with proteins L14 and L19. Post-translationally, methylated by PrmB.

One of the primary rRNA binding proteins, it binds directly near the 3'-end of the 23S rRNA, where it nucleates assembly of the 50S subunit. The polypeptide is Large ribosomal subunit protein uL3 (rplC) (Carsonella ruddii).